A 129-amino-acid polypeptide reads, in one-letter code: UPF0225 protein XOO0258 (129 aa).

It belongs to the UPF0225 family.

This chain is UPF0225 protein XOO0258, found in Xanthomonas oryzae pv. oryzae (strain MAFF 311018).